A 371-amino-acid polypeptide reads, in one-letter code: Glutamate 5-kinase (371 aa).

Lys14 provides a ligand contact to ATP. Positions 52, 139, and 151 each coordinate substrate. 171-172 (SD) serves as a coordination point for ATP. Residues 275–353 (EGRLHLDSGA…ADLAMELGPS (79 aa)) form the PUA domain.

It belongs to the glutamate 5-kinase family.

The protein localises to the cytoplasm. The catalysed reaction is L-glutamate + ATP = L-glutamyl 5-phosphate + ADP. Its pathway is amino-acid biosynthesis; L-proline biosynthesis; L-glutamate 5-semialdehyde from L-glutamate: step 1/2. Functionally, catalyzes the transfer of a phosphate group to glutamate to form L-glutamate 5-phosphate. This chain is Glutamate 5-kinase, found in Frankia casuarinae (strain DSM 45818 / CECT 9043 / HFP020203 / CcI3).